A 117-amino-acid polypeptide reads, in one-letter code: UPF0295 protein RBAM_008830 (117 aa).

Transmembrane regions (helical) follow at residues 13–33 and 41–61; these read TFAL…LFFK and LFMI…FWIG.

Belongs to the UPF0295 family.

The protein resides in the cell membrane. In Bacillus velezensis (strain DSM 23117 / BGSC 10A6 / LMG 26770 / FZB42) (Bacillus amyloliquefaciens subsp. plantarum), this protein is UPF0295 protein RBAM_008830.